The sequence spans 525 residues: GMP synthase [glutamine-hydrolyzing] (525 aa).

One can recognise a Glutamine amidotransferase type-1 domain in the interval 9–207 (RILILDFGSQ…VRDICQCEAL (199 aa)). Cys-86 acts as the Nucleophile in catalysis. Active-site residues include His-181 and Glu-183. The GMPS ATP-PPase domain occupies 208-400 (WTPAKIIDDA…LGLPYDMLYR (193 aa)). 235–241 (SGGVDSS) is a binding site for ATP.

Homodimer.

It catalyses the reaction XMP + L-glutamine + ATP + H2O = GMP + L-glutamate + AMP + diphosphate + 2 H(+). It functions in the pathway purine metabolism; GMP biosynthesis; GMP from XMP (L-Gln route): step 1/1. Its function is as follows. Catalyzes the synthesis of GMP from XMP. This is GMP synthase [glutamine-hydrolyzing] from Shigella boydii serotype 4 (strain Sb227).